The following is a 2216-amino-acid chain: RNA-directed RNA polymerase L (2216 aa).

The endonuclease stretch occupies residues Lys-26–Arg-289. Residues Glu-51, Asp-88, and Glu-101 each contribute to the Mn(2+) site. Lys-114 is a catalytic residue. A RdRp catalytic domain is found at Leu-1167–Val-1364. A Mg(2+)-binding site is contributed by Asp-1323.

Belongs to the Bunyavirales RNA polymerase family. Homomultimer; the oligomeric structure is essential for the polymerase activity. Interacts with nucleoprotein N. Interacts with protein Z; this interaction inhibits viral transcription and replication, Z partially blocks the product exit tunnel for the releasing nascent RNA product. Mn(2+) serves as cofactor. The cofactor is Mg(2+).

Its subcellular location is the virion. The protein resides in the host cytoplasm. The enzyme catalyses RNA(n) + a ribonucleoside 5'-triphosphate = RNA(n+1) + diphosphate. In terms of biological role, RNA-dependent RNA polymerase, which is responsible for the replication and transcription of the viral RNA genome using antigenomic RNA as an intermediate. During transcription, synthesizes subgenomic RNAs and assures their capping by a cap-snatching mechanism, which involves the endonuclease activity cleaving the host capped pre-mRNAs. These short capped RNAs are then used as primers for viral transcription. The 3'-end of subgenomic mRNAs molecules are heterogeneous and not polyadenylated. The replicase function is to direct synthesis of antigenomic and genomic RNA which are encapsidated and non capped. As a consequence of the use of the same enzyme for both transcription and replication, these mechanisms need to be well coordinated. These processes may be regulated by proteins N and Z in a dose-dependent manner. Z protein inhibits the viral polymerase L und thus the viral transcription and RNA synthesis. This is RNA-directed RNA polymerase L from Bear Canyon mammarenavirus (isolate Mouse/United States/AV A0070039/2000) (BCNV).